A 401-amino-acid polypeptide reads, in one-letter code: Dual specificity mitogen-activated protein kinase kinase 2 (401 aa).

The residue at position 1 (Met1) is an N-acetylmethionine. Residue Ser23 is modified to Phosphoserine. In terms of domain architecture, Protein kinase spans 72–370; the sequence is FERISELGAG…LKLLMNHAFI (299 aa). ATP contacts are provided by residues 78–86 and Lys101; that span reads LGAGNGGVV. Asp194 acts as the Proton acceptor in catalysis. A phosphoserine; by RAF mark is found at Ser222 and Ser226. A disordered region spans residues 282-310; that stretch reads PVVDGADGEPHSVSPRPRPPGRPISVGHG. A phosphoserine mark is found at Ser293, Ser295, and Ser306. Phosphothreonine occurs at positions 395 and 397.

Belongs to the protein kinase superfamily. STE Ser/Thr protein kinase family. MAP kinase kinase subfamily. As to quaternary structure, interacts with MORG1. Interacts with SGK1. Interacts with KSR1. Interacts with KSR1 and BRAF; the interaction with KSR1 mediates KSR1-BRAF dimerization. Interacts with GLS. The cofactor is Mg(2+). Post-translationally, phosphorylation on Ser/Thr by MAP kinase kinase kinases (RAF or MEKK1) positively regulates the kinase activity. Phosphorylated by MAP2K1/MEK1. Low levels of autophosphorylation have been observed. As to expression, expressed in adult intestine, kidney, liver, lung, pancreas, spleen, thymus, and at high levels in the neonatal brain. Lower expression is found in adult brain and heart.

The protein resides in the cytoplasm. Its subcellular location is the membrane. The catalysed reaction is L-seryl-[protein] + ATP = O-phospho-L-seryl-[protein] + ADP + H(+). It catalyses the reaction L-threonyl-[protein] + ATP = O-phospho-L-threonyl-[protein] + ADP + H(+). It carries out the reaction L-tyrosyl-[protein] + ATP = O-phospho-L-tyrosyl-[protein] + ADP + H(+). Inhibited by serine/threonine phosphatase 2A. Catalyzes the concomitant phosphorylation of a threonine and a tyrosine residue in a Thr-Glu-Tyr sequence located in MAP kinases. Activates the ERK1 and ERK2 MAP kinases. Activates BRAF in a KSR1 or KSR2-dependent manner; by binding to KSR1 or KSR2 releases the inhibitory intramolecular interaction between KSR1 or KSR2 protein kinase and N-terminal domains which promotes KSR1 or KSR2-BRAF dimerization and BRAF activation. The protein is Dual specificity mitogen-activated protein kinase kinase 2 (Map2k2) of Mus musculus (Mouse).